Consider the following 362-residue polypeptide: MNHYLFSESLMEQLKTLSTSWSLPVAAVVAAIGIFATMGLFSSKNHMPVEGRTVLLTGASEGMGRSAAIQLSQKGANVILVSRNVGRLEEALVDVRAAAKNPSTQRFTYISADVSEHDYAAAVLAEAIAWNGGRSPDIVWCVAGMSTPLLWTDDGSMAAARRNMDVNYFGSAEMSRAILREWLAPENSTGPNGEPKHLVFTASMLALFAILGYGPYTPTKWALRGLADTLAMEVNYYPDNPVKVHIVYPGTIVSPGYERENQTKPDITVELEKDEPAESPDTVARRAIAGLEAGKYFVDVSFLGRLMQCGIMGGSPRNNWVLDTLMGWLIPIIYFFVLRGMNSTIVKWAREKGHPFTHPKKK.

Leu-55 provides a ligand contact to NADP(+). NADPH is bound by residues Gly-58, Ser-60, Gly-62, and Arg-83. The short motif at 58–62 (GASEG) is the GXSXG element. Asn-84 lines the NADP(+) pocket. Residues Arg-87 and Asp-113 each contribute to the NADPH site. 6 residues coordinate NADP(+): Asp-113, Arg-176, Tyr-216, Lys-220, Ile-252, and Ser-254. Tyr-216 functions as the Proton acceptor in the catalytic mechanism. The Lowers pKa of active site Tyr role is filled by Lys-220. Residues 318 to 338 (NNWVLDTLMGWLIPIIYFFVL) traverse the membrane as a helical segment.

The protein belongs to the short-chain dehydrogenases/reductases (SDR) family.

The protein resides in the endoplasmic reticulum membrane. The catalysed reaction is sphinganine + NADP(+) = 3-oxosphinganine + NADPH + H(+). Its pathway is lipid metabolism; sphingolipid metabolism. Catalyzes the reduction of 3'-oxosphinganine (3-ketodihydrosphingosine/KDS) to sphinganine (dihydrosphingosine/DHS), the second step of de novo sphingolipid biosynthesis. In Neurospora crassa (strain ATCC 24698 / 74-OR23-1A / CBS 708.71 / DSM 1257 / FGSC 987), this protein is 3-ketodihydrosphingosine reductase gsl-3 (gsl-3).